The primary structure comprises 206 residues: ATP phosphoribosyltransferase (206 aa).

It belongs to the ATP phosphoribosyltransferase family. Short subfamily. In terms of assembly, heteromultimer composed of HisG and HisZ subunits.

It localises to the cytoplasm. The catalysed reaction is 1-(5-phospho-beta-D-ribosyl)-ATP + diphosphate = 5-phospho-alpha-D-ribose 1-diphosphate + ATP. It participates in amino-acid biosynthesis; L-histidine biosynthesis; L-histidine from 5-phospho-alpha-D-ribose 1-diphosphate: step 1/9. In terms of biological role, catalyzes the condensation of ATP and 5-phosphoribose 1-diphosphate to form N'-(5'-phosphoribosyl)-ATP (PR-ATP). Has a crucial role in the pathway because the rate of histidine biosynthesis seems to be controlled primarily by regulation of HisG enzymatic activity. This chain is ATP phosphoribosyltransferase, found in Sulfurovum sp. (strain NBC37-1).